The chain runs to 570 residues: Adenine deaminase 2 (570 aa).

Belongs to the metallo-dependent hydrolases superfamily. Adenine deaminase family. It depends on Mn(2+) as a cofactor.

It carries out the reaction adenine + H2O + H(+) = hypoxanthine + NH4(+). The protein is Adenine deaminase 2 of Carboxydothermus hydrogenoformans (strain ATCC BAA-161 / DSM 6008 / Z-2901).